The following is a 412-amino-acid chain: uncharacterized protein (412 aa).

Residues 6–64 form the TRAM domain; it reads ELAKGDIISVEVLRPAHGGEGIGHHDGRVIFVKGGIPGDVVDVEIAQLKKKWARGEVVK. Positions 242, 278, 300, and 341 each coordinate S-adenosyl-L-methionine. The active-site Nucleophile is the cysteine 368.

It belongs to the class I-like SAM-binding methyltransferase superfamily. RNA M5U methyltransferase family.

This is an uncharacterized protein from Corynebacterium glutamicum (strain ATCC 13032 / DSM 20300 / JCM 1318 / BCRC 11384 / CCUG 27702 / LMG 3730 / NBRC 12168 / NCIMB 10025 / NRRL B-2784 / 534).